Consider the following 341-residue polypeptide: L-threonine 3-dehydrogenase (341 aa).

C38 contributes to the Zn(2+) binding site. Active-site charge relay system residues include T40 and H43. 6 residues coordinate Zn(2+): H63, E64, C93, C96, C99, and C107. NAD(+)-binding positions include I175, D195, R200, 262 to 264, and 286 to 287; these read LGI and IY.

This sequence belongs to the zinc-containing alcohol dehydrogenase family. As to quaternary structure, homotetramer. Requires Zn(2+) as cofactor.

It localises to the cytoplasm. It carries out the reaction L-threonine + NAD(+) = (2S)-2-amino-3-oxobutanoate + NADH + H(+). It functions in the pathway amino-acid degradation; L-threonine degradation via oxydo-reductase pathway; glycine from L-threonine: step 1/2. Its function is as follows. Catalyzes the NAD(+)-dependent oxidation of L-threonine to 2-amino-3-ketobutyrate. The polypeptide is L-threonine 3-dehydrogenase (Yersinia pestis bv. Antiqua (strain Antiqua)).